The sequence spans 234 residues: Large ribosomal subunit protein uL1 (234 aa).

This sequence belongs to the universal ribosomal protein uL1 family. As to quaternary structure, part of the 50S ribosomal subunit.

Binds directly to 23S rRNA. The L1 stalk is quite mobile in the ribosome, and is involved in E site tRNA release. Its function is as follows. Protein L1 is also a translational repressor protein, it controls the translation of the L11 operon by binding to its mRNA. This is Large ribosomal subunit protein uL1 from Erwinia tasmaniensis (strain DSM 17950 / CFBP 7177 / CIP 109463 / NCPPB 4357 / Et1/99).